A 416-amino-acid polypeptide reads, in one-letter code: Methylthioribose-1-phosphate isomerase (416 aa).

Catalysis depends on D280, which acts as the Proton donor.

It belongs to the eIF-2B alpha/beta/delta subunits family. MtnA subfamily.

It localises to the cytoplasm. Its subcellular location is the nucleus. The enzyme catalyses 5-(methylsulfanyl)-alpha-D-ribose 1-phosphate = 5-(methylsulfanyl)-D-ribulose 1-phosphate. The protein operates within amino-acid biosynthesis; L-methionine biosynthesis via salvage pathway; L-methionine from S-methyl-5-thio-alpha-D-ribose 1-phosphate: step 1/6. Its function is as follows. Catalyzes the interconversion of methylthioribose-1-phosphate (MTR-1-P) into methylthioribulose-1-phosphate (MTRu-1-P). In Candida albicans (strain SC5314 / ATCC MYA-2876) (Yeast), this protein is Methylthioribose-1-phosphate isomerase.